The primary structure comprises 849 residues: Dopamine receptor 2 (849 aa).

At 1–39 (MEAGETWNVSLEWPPPSLDLSTITQTPSTIVGSGIPLNY) the chain is on the extracellular side. An N-linked (GlcNAc...) asparagine glycan is attached at N8. Residues 40–60 (AGLSLIVIPLITLLGNLLVII) form a helical membrane-spanning segment. Residues 61 to 70 (SVLRYRALQS) are Cytoplasmic-facing. Residues 71–91 (AINFLILGLAVADLLVAIIVM) form a helical membrane-spanning segment. Topologically, residues 92-112 (PYAVYVYVTNGDWYLGNLMCD) are extracellular. C111 and C190 are disulfide-bonded. A helical membrane pass occupies residues 113–133 (IYMASDVCCSTASILLLAVIS). The Cytoplasmic portion of the chain corresponds to 134–155 (FDRYRAVSLPIQYSRQSQNVKR). The chain crosses the membrane as a helical span at residues 156–176 (VWTLIAVIWLVSLTLASPMVF). Topologically, residues 177–203 (GVNVRPPDANPYECRFYNAEFSILSSM) are extracellular. Residues 183-849 (PDANPYECRF…HHFSNKQAHV (667 aa)) are required for the interaction with gpa-14. The helical transmembrane segment at 204–224 (ISFVIPCFLVLFVYIRIIIAL) threads the bilayer. The Cytoplasmic segment spans residues 225 to 759 (KKREKAAKMR…QRKEKRATKT (535 aa)). Positions 450–515 (RRSSYADDSQ…NNSRTASITN (66 aa)) are disordered. The segment covering 457-470 (DSQPTSSQTSSGDG) has biased composition (low complexity). Basic residues predominate over residues 477–498 (GQKRFRNLSRNYSTKHHRKVVK). The span at 501-515 (RGNSRNNSRTASITN) shows a compositional bias: polar residues. A helical transmembrane segment spans residues 760–780 (LGVVVGVFLVCWVPFFVINIL). At 781-798 (NAVCILLNKDSCQVGYDL) the chain is on the extracellular side. A helical membrane pass occupies residues 799–819 (FFYCTWIGYMNSFMNPIIYTI). At 820–849 (FNTEFRRAFKSIIFGRNSTRHHFSNKQAHV) the chain is on the cytoplasmic side.

The protein belongs to the G-protein coupled receptor 1 family. Interacts (via C-terminus) with the G-alpha protein gpa-14; the interaction is direct. As to expression, expressed in all dopaminergic neurons. Expressed in neurons around the nerve ring and the posterior side of the body including PDE neurons. In hermaphrodites, expressed in the head and tail ganglia including in the RIA interneuron pair, and in a subset of sublateral interneurons and the PDA neuron in the tail. Expressed in cholinergic SIA neurons. Also expressed in the male tail. In males, expressed in the dorsal spicule protractor, ventral spicule protractor, dorsal spicule retractor and ventral spicule retractor muscles and the sensory post-cloacal sensilla B (PCB) neuron. In males, expressed in the sensory hook neurons HOA.

The protein resides in the cell membrane. G-protein coupled receptor which binds to the neurotransmitter dopamine with high affinity leading to the activation of an associated G-protein and downstream signaling pathways. Couples to G-proteins to inhibit adenylate cyclase (AC) activity and cAMP production. Inhibits synaptic vesicle fusion to negatively regulate the release of dopamine at dopaminergic neuron synapses. Antagonizes octopamine signaling in response to food by promoting the dopamine-mediated suppression of crh-1/CREB1 transcription factor activation in cholinergic SIA neurons. This is most likely in association with the G(o)-alpha G-protein subunit goa-1. In association with the G-alpha protein gpa-14, modulates two types of learning behavior: touch habituation and chemosensory associative conditioning. May act partly via tsp-17 to negatively regulate dopamine reuptake transporter dat-1 activity. Plays a role in behavioral plasticity and regulates the decision-making process when conflicting alternatives are present. Promotes male mating behavior by antagonizing acetylcholine signaling to control the protrusions of copulatory spicules from the tail of males during hermaphrodite vulval location. Modulates unc-7 activity at gap junctions to promote inhibitory neuronal signaling transduction between chemosensory and mechanosensory neurons, and thus ensures spicule insertion attempts are confined to the hermaphrodite vulva during copulation. Its function is as follows. G-protein coupled receptor which binds to the neurotransmitter dopamine with high affinity leading to the activation of an associated G-protein and downstream signaling pathways. Couples to G-proteins to inhibit adenylate cyclase (AC) activity and cAMP production. The protein is Dopamine receptor 2 of Caenorhabditis elegans.